Consider the following 316-residue polypeptide: Apolipoprotein E (316 aa).

The N-terminal stretch at 1 to 18 is a signal peptide; that stretch reads MKVLWVALVVALLAGCQA. A run of 8 repeats spans residues 79–100, 101–122, 123–144, 145–166, 167–188, 189–210, 211–232, and 233–254. Positions 79-254 are 8 X 22 AA approximate tandem repeats; sequence VLMEETMKEV…RLDKMRQQLE (176 aa). Methionine sulfoxide is present on Met-142. Ser-146 is modified (phosphoserine). Positions 157–167 are LDL and other lipoprotein receptors binding; the sequence is HLRKLRKRLLR. 161–164 serves as a coordination point for heparin; the sequence is LRKR. The segment at 209–289 is lipid-binding and lipoprotein association; it reads AATLSTQAAQ…SWFEPLVGDM (81 aa). An O-linked (GalNAc...) threonine glycan is attached at Thr-211. 228–235 contacts heparin; it reads RQKLHGRL. Residues 265-316 form a homooligomerization region; sequence SQIRLQAEAFQARLRSWFEPLVGDMQRQWAGLVEKVQLALHLSPTSPPSENH. The segment at 277–289 is specificity for association with VLDL; it reads RLRSWFEPLVGDM.

It belongs to the apolipoprotein A1/A4/E family. In terms of assembly, homotetramer. May interact with ABCA1; functionally associated with ABCA1 in the biogenesis of HDLs. May interact with APP/A4 amyloid-beta peptide; the interaction is extremely stable in vitro but its physiological significance is unclear. May interact with MAPT. May interact with MAP2. In the cerebrospinal fluid, interacts with secreted SORL1. Interacts with PMEL; this allows the loading of PMEL luminal fragment on ILVs to induce fibril nucleation. In terms of processing, APOE exists as multiple glycosylated and sialylated glycoforms within cells and in plasma. The extent of glycosylation and sialylation are tissue and context specific. Glycated in plasma VLDL. Post-translationally, phosphorylated by FAM20C in the extracellular medium.

It is found in the secreted. It localises to the extracellular space. The protein localises to the extracellular matrix. Its subcellular location is the extracellular vesicle. The protein resides in the endosome. It is found in the multivesicular body. In terms of biological role, APOE is an apolipoprotein, a protein associating with lipid particles, that mainly functions in lipoprotein-mediated lipid transport between organs via the plasma and interstitial fluids. APOE is a core component of plasma lipoproteins and is involved in their production, conversion and clearance. Apolipoproteins are amphipathic molecules that interact both with lipids of the lipoprotein particle core and the aqueous environment of the plasma. As such, APOE associates with chylomicrons, chylomicron remnants, very low density lipoproteins (VLDL) and intermediate density lipoproteins (IDL) but shows a preferential binding to high-density lipoproteins (HDL). It also binds a wide range of cellular receptors including the LDL receptor/LDLR and the very low-density lipoprotein receptor/VLDLR that mediate the cellular uptake of the APOE-containing lipoprotein particles. Finally, APOE also has a heparin-binding activity and binds heparan-sulfate proteoglycans on the surface of cells, a property that supports the capture and the receptor-mediated uptake of APOE-containing lipoproteins by cells. In Capra hircus aegagrus (Wild goat), this protein is Apolipoprotein E (APOE).